Consider the following 78-residue polypeptide: Colicin-V immunity protein (78 aa).

Functionally, this protein is able to protect a cell, which harbors the plasmid ColV encoding colicin V, against colicin V. The chain is Colicin-V immunity protein (cvi) from Escherichia coli.